Consider the following 513-residue polypeptide: Putative thymidine phosphorylase (513 aa).

This sequence belongs to the thymidine/pyrimidine-nucleoside phosphorylase family. Type 2 subfamily.

It catalyses the reaction thymidine + phosphate = 2-deoxy-alpha-D-ribose 1-phosphate + thymine. This Rhodopseudomonas palustris (strain BisA53) protein is Putative thymidine phosphorylase.